The following is a 389-amino-acid chain: uncharacterized protein (389 aa).

Residues 1–29 (MQPSFTPSGGKWLSIAVILLVIGLVVGFA) form the signal peptide.

It belongs to the bacterial solute-binding protein 1 family. WtpA subfamily.

This is an uncharacterized protein from Thermoplasma volcanium (strain ATCC 51530 / DSM 4299 / JCM 9571 / NBRC 15438 / GSS1).